Reading from the N-terminus, the 90-residue chain is uncharacterized protein (90 aa).

This is an uncharacterized protein from Saccharomyces cerevisiae (strain ATCC 204508 / S288c) (Baker's yeast).